We begin with the raw amino-acid sequence, 332 residues long: uncharacterized protein (332 aa).

The first 23 residues, 1–23, serve as a signal peptide directing secretion; it reads MKRIPSLIIGLLLILATWHSVLA. Residues 231-251 traverse the membrane as a helical segment; the sequence is SFFLGMIVTLIILAPVILYLW.

The protein resides in the membrane. This is an uncharacterized protein from Pyrococcus horikoshii (strain ATCC 700860 / DSM 12428 / JCM 9974 / NBRC 100139 / OT-3).